A 594-amino-acid chain; its full sequence is Isocitrate dehydrogenase kinase/phosphatase (594 aa).

Residues 315 to 321 (APGIRGM) and Lys336 each bind ATP. The active site involves Asp371.

Belongs to the AceK family.

Its subcellular location is the cytoplasm. The catalysed reaction is L-seryl-[isocitrate dehydrogenase] + ATP = O-phospho-L-seryl-[isocitrate dehydrogenase] + ADP + H(+). Bifunctional enzyme which can phosphorylate or dephosphorylate isocitrate dehydrogenase (IDH) on a specific serine residue. This is a regulatory mechanism which enables bacteria to bypass the Krebs cycle via the glyoxylate shunt in response to the source of carbon. When bacteria are grown on glucose, IDH is fully active and unphosphorylated, but when grown on acetate or ethanol, the activity of IDH declines drastically concomitant with its phosphorylation. In Klebsiella pneumoniae subsp. pneumoniae (strain ATCC 700721 / MGH 78578), this protein is Isocitrate dehydrogenase kinase/phosphatase.